A 460-amino-acid polypeptide reads, in one-letter code: GTPase Der (460 aa).

EngA-type G domains lie at Lys-9–Gln-171 and Ile-199–Ser-370. Residues Gly-15 to Ser-22, Asp-62 to Met-66, Asn-123 to Asp-126, Gly-205 to Ser-212, Asp-252 to Ile-256, and Asn-316 to Asp-319 contribute to the GTP site. In terms of domain architecture, KH-like spans Arg-371–Lys-455.

Belongs to the TRAFAC class TrmE-Era-EngA-EngB-Septin-like GTPase superfamily. EngA (Der) GTPase family. Associates with the 50S ribosomal subunit.

Functionally, GTPase that plays an essential role in the late steps of ribosome biogenesis. This chain is GTPase Der, found in Helicobacter pylori (strain G27).